Here is a 547-residue protein sequence, read N- to C-terminus: Chaperonin GroEL 2 (547 aa).

ATP contacts are provided by residues 30–33 (TLGP), lysine 51, 87–91 (DGTTT), glycine 415, and aspartate 496.

It belongs to the chaperonin (HSP60) family. As to quaternary structure, forms a cylinder of 14 subunits composed of two heptameric rings stacked back-to-back. Interacts with the co-chaperonin GroES.

The protein localises to the cytoplasm. It carries out the reaction ATP + H2O + a folded polypeptide = ADP + phosphate + an unfolded polypeptide.. Functionally, together with its co-chaperonin GroES, plays an essential role in assisting protein folding. The GroEL-GroES system forms a nano-cage that allows encapsulation of the non-native substrate proteins and provides a physical environment optimized to promote and accelerate protein folding. In Rhodopseudomonas palustris (strain ATCC BAA-98 / CGA009), this protein is Chaperonin GroEL 2.